Here is a 946-residue protein sequence, read N- to C-terminus: Zinc finger CCCH-type antiviral protein 1 (946 aa).

An N-terminal domain region spans residues 1–254 (MTDPEVFCFI…DRSKSRDRFH (254 aa)). The Nuclear localization signal signature appears at 69–76 (RARVCRRK). 4 C3H1-type zinc fingers span residues 73 to 86 (CRRK…DSLH), 87 to 113 (LCKL…HDVL), 150 to 172 (CKSY…ERLH), and 173 to 194 (ICEH…HNLM). 2 disordered regions span residues 221–283 (NKHT…KDPL) and 302–354 (RAQL…AAGF). Positions 224–254 (TRRNPPSMRAPHPHRRGGAHRDRSKSRDRFH) are binding to EXOSC5. Basic and acidic residues predominate over residues 242–257 (AHRDRSKSRDRFHHNS). Serine 257 carries the phosphoserine modification. Serine 262 bears the Phosphoserine; by GSK3-beta mark. Residues serine 265, serine 269, and serine 273 each carry the phosphoserine modification. At threonine 277 the chain carries Phosphothreonine. The Nuclear export signal signature appears at 283-290 (LEDVSADV). Serine 324 and serine 350 each carry phosphoserine. The short motif at 412–413 (KR) is the Nuclear localization signal element. Residue serine 425 is modified to Phosphoserine. The segment at 461–491 (NPAWPGTSTHNGPNGFSQIMDETPNVSKSSP) is disordered. Residues 466–477 (GTSTHNGPNGFS) are compositionally biased toward polar residues. Tyrosine 508 bears the Phosphotyrosine mark. Residues 523 to 570 (GETTTPVQGSNRLPPSPLSSSTSHRVAASGSPGKSSTHASVSPASEPS) are disordered. Positions 524-533 (ETTTPVQGSN) are enriched in polar residues. Serine 553 is subject to Phosphoserine. Positions 554-567 (PGKSSTHASVSPAS) are enriched in polar residues. Phosphoserine is present on residues serine 583 and serine 680. The WWE domain occupies 684–771 (FVEKTLNSVF…ASKTQRHVVR (88 aa)). Residues 805 to 946 (SPQRNASTVS…SLDSSGLQRK (142 aa)) enclose the PARP catalytic domain.

The protein belongs to the ARTD/PARP family. Homodimer or homooligomer. Homooligomerization is essential for its antiviral activity. Interacts with EXOSC5. Interacts (via N-terminal domain) with DDX17 in an RNA-independent manner. Interacts with EXOSC3, EXOSC7, DCP2 and DCP1A. Interacts with PARN in an RNA-independent manner. Interacts with XRN1 in an RNA-dependent manner. Interacts (via N-terminal domain) with DHX30 (via N-terminus) in an RNA-independent manner. Isoform 2 interacts (via zinc-fingers) with RIGI in an RNA-dependent manner. Phosphorylation at Ser-273 is essential for sequential phosphorylation of Ser-269, Ser-265, Ser-262 and Ser-257 by GSK3-beta. Phosphorylation by GSK3-beta enhances its antiviral activity.

It is found in the cytoplasm. The protein localises to the nucleus. Functionally, antiviral protein which inhibits the replication of viruses by recruiting the cellular RNA degradation machineries to degrade the viral mRNAs. Binds to a ZAP-responsive element (ZRE) present in the target viral mRNA, recruits cellular poly(A)-specific ribonuclease PARN to remove the poly(A) tail, and the 3'-5' exoribonuclease complex exosome to degrade the RNA body from the 3'-end. It also recruits the decapping complex DCP1-DCP2 through RNA helicase p72 (DDX17) to remove the cap structure of the viral mRNA to initiate its degradation from the 5'-end. Its target viruses belong to families which include retroviridae: human immunodeficiency virus type 1 (HIV-1) and moloney and murine leukemia virus (MoMLV), filoviridae: ebola virus (EBOV) and marburg virus (MARV), togaviridae: sindbis virus (SINV) and Ross river virus (RRV). Specifically targets the multiply spliced but not unspliced or singly spliced HIV-1 mRNAs for degradation. Isoform 1 is a more potent viral inhibitor than isoform 2. Isoform 2 acts as a positive regulator of RIG-I signaling resulting in activation of the downstream effector IRF3 leading to the expression of type I IFNs and IFN stimulated genes (ISGs). The protein is Zinc finger CCCH-type antiviral protein 1 (Zc3hav1) of Mus musculus (Mouse).